An 839-amino-acid chain; its full sequence is Probable beta-glucosidase I (839 aa).

Asparagine 197 is a glycosylation site (N-linked (GlcNAc...) asparagine). The active site involves aspartate 225. Residues 395-555 (DGKTGFSFKV…GQEELISNAV (161 aa)) enclose the PA14 domain. The N-linked (GlcNAc...) asparagine glycan is linked to asparagine 620.

The protein belongs to the glycosyl hydrolase 3 family.

The protein resides in the secreted. It catalyses the reaction Hydrolysis of terminal, non-reducing beta-D-glucosyl residues with release of beta-D-glucose.. It functions in the pathway glycan metabolism; cellulose degradation. Functionally, beta-glucosidases are one of a number of cellulolytic enzymes involved in the degradation of cellulosic biomass. Catalyzes the last step releasing glucose from the inhibitory cellobiose. The protein is Probable beta-glucosidase I (bglI) of Aspergillus oryzae (strain ATCC 42149 / RIB 40) (Yellow koji mold).